Here is a 98-residue protein sequence, read N- to C-terminus: uncharacterized protein (98 aa).

The segment at 77–98 (SERAGEEVPPLAVAGSDDGHDH) is disordered.

The protein to M.tuberculosis Rv1991c and Rv3269.

This is an uncharacterized protein from Mycobacterium bovis (strain ATCC BAA-935 / AF2122/97).